The following is a 117-amino-acid chain: MSTVELLKHIYDINLSYLLLAQRLINHEKASAMFRLGISDSMADTLSELTLPQLVKLAETNQLVCNFRFEESETIQQLTRESRVDDLQQIHTGILLSTHLFQKLFSKKDDTSVKKRA.

Belongs to the FlhD family. In terms of assembly, homodimer; disulfide-linked. Forms a heterohexamer composed of two FlhC and four FlhD subunits. Each FlhC binds a FlhD dimer, forming a heterotrimer, and a hexamer assembles by dimerization of two heterotrimers.

The protein localises to the cytoplasm. Its function is as follows. Functions in complex with FlhC as a master transcriptional regulator that regulates transcription of several flagellar and non-flagellar operons by binding to their promoter region. Activates expression of class 2 flagellar genes, including fliA, which is a flagellum-specific sigma factor that turns on the class 3 genes. Also regulates genes whose products function in a variety of physiological pathways. The polypeptide is Flagellar transcriptional regulator FlhD (Photorhabdus laumondii subsp. laumondii (strain DSM 15139 / CIP 105565 / TT01) (Photorhabdus luminescens subsp. laumondii)).